A 904-amino-acid polypeptide reads, in one-letter code: DNA replication licensing factor MCM2 (904 aa).

The segment covering 1–15 (MAESSESFTMASSPA) has biased composition (polar residues). The disordered stretch occupies residues 1–80 (MAESSESFTM…ELIGDGMERD (80 aa)). N-acetylalanine is present on Ala2. The tract at residues 2–257 (AESSESFTMA…LPEAPAELLQ (256 aa)) is interaction with KAT7. 2 positions are modified to phosphoserine: Ser12 and Ser13. Residue Thr25 is modified to Phosphothreonine. 3 positions are modified to phosphoserine: Ser26, Ser27, and Ser32. Thr39 carries the phosphothreonine modification. Ser40 bears the Phosphoserine; by CDC7 mark. A Phosphoserine modification is found at Ser41. Ser53 bears the Phosphoserine; by CDC7 mark. The residue at position 59 (Thr59) is a Phosphothreonine. The interaction with DNJC9 stretch occupies residues 61-130 (GPLEEEEDGE…DREAGRGLGR (70 aa)). Positions 62–73 (PLEEEEDGEELI) are enriched in acidic residues. Ser108 is modified (phosphoserine; by ATR). Positions 109-167 (QREAAERAMRQRDREAGRGLGRMRRGLLYDSDEEDEERPARKRRQVERATEDGEEDEEM) are disordered. Residues 111–125 (EAAERAMRQRDREAG) are compositionally biased toward basic and acidic residues. Tyr137 is modified (phosphotyrosine). Position 139 is a phosphoserine (Ser139). Lys178 is covalently cross-linked (Glycyl lysine isopeptide (Lys-Gly) (interchain with G-Cter in SUMO2)). N6-acetyllysine is present on Lys216. The C4-type zinc finger occupies 329–355 (CNKCNFVLGPFCQSQNQEVKPGSCPEC). Ser381 and Ser484 each carry phosphoserine. The 207-residue stretch at 473–679 (IGEKIFASIA…VQDEMLARFV (207 aa)) folds into the MCM domain. The ADP site is built by Ser530 and Gln531. The Arginine finger motif lies at 655–658 (SRFD). The tract at residues 686–705 (HHPSNKEEEGLANGSAAEPA) is disordered.

This sequence belongs to the MCM family. As to quaternary structure, component of the MCM2-7 complex. The complex forms a toroidal hexameric ring with the proposed subunit order MCM2-MCM6-MCM4-MCM7-MCM3-MCM5. Component of the CMG helicase complex, a hexameric ring of related MCM2-7 subunits stabilized by CDC45 and the tetrameric GINS complex. Interacts with DBF4. Interacts with KAT7. May interact with MCM10. Component of the replisome complex composed of at least DONSON, MCM2, MCM7, PCNA and TICRR. Forms a co-chaperone complex with DNAJC9 and histone H3.3-H4 heterodimers. Within the complex, interacts (via N-terminus) with DNAJC9 (via C-terminus); the interaction is histone-dependent. Interacts with histones H3.1 and H3.3. Interacts with AGER/RAGE; the interaction is increased following DNA replication stress and stabilizes the MCM2-7 complex at replication forks. Phosphorylated on Ser-108 by ATR in proliferating cells. Ser-108 proliferation is increased by genotoxic agents. Ser-40 is mediated by the CDC7-DBF4 and CDC7-DBF4B complexes, while Ser-53 phosphorylation is only mediated by the CDC7-DBF4 complex. Phosphorylation by the CDC7-DBF4 complex during G1/S phase is required for the initiation of DNA replication.

It is found in the nucleus. The protein localises to the chromosome. It catalyses the reaction ATP + H2O = ADP + phosphate + H(+). In terms of biological role, acts as a component of the MCM2-7 complex (MCM complex) which is the replicative helicase essential for 'once per cell cycle' DNA replication initiation and elongation in eukaryotic cells. Core component of CDC45-MCM-GINS (CMG) helicase, the molecular machine that unwinds template DNA during replication, and around which the replisome is built. The active ATPase sites in the MCM2-7 ring are formed through the interaction surfaces of two neighboring subunits such that a critical structure of a conserved arginine finger motif is provided in trans relative to the ATP-binding site of the Walker A box of the adjacent subunit. The six ATPase active sites, however, are likely to contribute differentially to the complex helicase activity. Required for the entry in S phase and for cell division. Plays a role in terminally differentiated hair cells development of the cochlea and induces cells apoptosis. The chain is DNA replication licensing factor MCM2 from Homo sapiens (Human).